The primary structure comprises 606 residues: Armadillo repeat-containing X-linked protein 5 (606 aa).

A disordered region spans residues 1–85 (MIGSKTKRKA…KVKKKKDKTN (85 aa)). Polar residues predominate over residues 15–26 (GASSKPGTNSPA). Over residues 40–59 (VKAEPKEEWGNQAEARDEAV) the composition is skewed to basic and acidic residues. ARM repeat units follow at residues 349–388 (CKSR…GISP), 470–509 (VKFD…CLSK), 511–551 (QANT…NINF), and 568–606 (SELI…ILKL).

It belongs to the eutherian X-chromosome-specific Armcx family. Highly expressed in the developing neural tissues, neural crest derivatives and hind limbs.

The polypeptide is Armadillo repeat-containing X-linked protein 5 (Armcx5) (Mus musculus (Mouse)).